The sequence spans 83 residues: Cytochrome c oxidase subunit 7A2, mitochondrial (83 aa).

A mitochondrion-targeting transit peptide spans 1-23 (MLRNLLALRQIAQRTISTTSRRH). Topologically, residues 24 to 48 (FENKVPEKQKLFQEDNGMPVHLKGG) are mitochondrial matrix. Lys33 bears the N6-acetyllysine mark. Residues 49 to 77 (ASDALLYRATMALTLGGTAYAIYLLAMAA) traverse the membrane as a helical segment. Residues 78-83 (FPKKQN) lie on the Mitochondrial intermembrane side of the membrane.

This sequence belongs to the cytochrome c oxidase VIIa family. In terms of assembly, component of the cytochrome c oxidase (complex IV, CIV), a multisubunit enzyme composed of 14 subunits. The complex is composed of a catalytic core of 3 subunits MT-CO1, MT-CO2 and MT-CO3, encoded in the mitochondrial DNA, and 11 supernumerary subunits COX4I, COX5A, COX5B, COX6A, COX6B, COX6C, COX7A, COX7B, COX7C, COX8 and NDUFA4, which are encoded in the nuclear genome. The complex exists as a monomer or a dimer and forms supercomplexes (SCs) in the inner mitochondrial membrane with NADH-ubiquinone oxidoreductase (complex I, CI) and ubiquinol-cytochrome c oxidoreductase (cytochrome b-c1 complex, complex III, CIII), resulting in different assemblies (supercomplex SCI(1)III(2)IV(1) and megacomplex MCI(2)III(2)IV(2)). Interacts with PET100.

It localises to the mitochondrion inner membrane. It functions in the pathway energy metabolism; oxidative phosphorylation. In terms of biological role, component of the cytochrome c oxidase, the last enzyme in the mitochondrial electron transport chain which drives oxidative phosphorylation. The respiratory chain contains 3 multisubunit complexes succinate dehydrogenase (complex II, CII), ubiquinol-cytochrome c oxidoreductase (cytochrome b-c1 complex, complex III, CIII) and cytochrome c oxidase (complex IV, CIV), that cooperate to transfer electrons derived from NADH and succinate to molecular oxygen, creating an electrochemical gradient over the inner membrane that drives transmembrane transport and the ATP synthase. Cytochrome c oxidase is the component of the respiratory chain that catalyzes the reduction of oxygen to water. Electrons originating from reduced cytochrome c in the intermembrane space (IMS) are transferred via the dinuclear copper A center (CU(A)) of subunit 2 and heme A of subunit 1 to the active site in subunit 1, a binuclear center (BNC) formed by heme A3 and copper B (CU(B)). The BNC reduces molecular oxygen to 2 water molecules using 4 electrons from cytochrome c in the IMS and 4 protons from the mitochondrial matrix. The protein is Cytochrome c oxidase subunit 7A2, mitochondrial (Cox7a2) of Mus musculus (Mouse).